Here is a 119-residue protein sequence, read N- to C-terminus: Small ribosomal subunit protein bS16 (119 aa).

Residues 81 to 119 (GLAKRPARNNPKKAEPGQKAKERAAARAEKAGAGDDAAA) are disordered. Residues 92-113 (KKAEPGQKAKERAAARAEKAGA) are compositionally biased toward basic and acidic residues.

It belongs to the bacterial ribosomal protein bS16 family.

The chain is Small ribosomal subunit protein bS16 from Methylobacterium sp. (strain 4-46).